We begin with the raw amino-acid sequence, 262 residues long: Acyl-[acyl-carrier-protein]--UDP-N-acetylglucosamine O-acyltransferase (262 aa).

This sequence belongs to the transferase hexapeptide repeat family. LpxA subfamily. As to quaternary structure, homotrimer.

Its subcellular location is the cytoplasm. It catalyses the reaction a (3R)-hydroxyacyl-[ACP] + UDP-N-acetyl-alpha-D-glucosamine = a UDP-3-O-[(3R)-3-hydroxyacyl]-N-acetyl-alpha-D-glucosamine + holo-[ACP]. It participates in glycolipid biosynthesis; lipid IV(A) biosynthesis; lipid IV(A) from (3R)-3-hydroxytetradecanoyl-[acyl-carrier-protein] and UDP-N-acetyl-alpha-D-glucosamine: step 1/6. Functionally, involved in the biosynthesis of lipid A, a phosphorylated glycolipid that anchors the lipopolysaccharide to the outer membrane of the cell. The sequence is that of Acyl-[acyl-carrier-protein]--UDP-N-acetylglucosamine O-acyltransferase from Burkholderia lata (strain ATCC 17760 / DSM 23089 / LMG 22485 / NCIMB 9086 / R18194 / 383).